A 242-amino-acid chain; its full sequence is tRNA (guanine-N(1)-)-methyltransferase (242 aa).

S-adenosyl-L-methionine-binding positions include Gly112 and 131 to 136; that span reads LGDFIL.

Belongs to the RNA methyltransferase TrmD family. As to quaternary structure, homodimer.

The protein localises to the cytoplasm. It catalyses the reaction guanosine(37) in tRNA + S-adenosyl-L-methionine = N(1)-methylguanosine(37) in tRNA + S-adenosyl-L-homocysteine + H(+). In terms of biological role, specifically methylates guanosine-37 in various tRNAs. This chain is tRNA (guanine-N(1)-)-methyltransferase, found in Crocosphaera subtropica (strain ATCC 51142 / BH68) (Cyanothece sp. (strain ATCC 51142)).